Consider the following 311-residue polypeptide: Acyl-CoA dehydrogenase IpdE2 (311 aa).

FAD is bound by residues arginine 206 and glycine 273.

Belongs to the acyl-CoA dehydrogenase family. In terms of assembly, heterotetramer composed of 2 IpdE1 subunits and 2 IpdE2 subunits. Requires FAD as cofactor.

It carries out the reaction 3-[(3aS,4S,5R,7aS)-5-hydroxy-7a-methyl-1-oxo-octahydro-1H-inden-4-yl]propanoyl-CoA + A = (2E)-3-[(3aS,4S,5R,7aS)-5-hydroxy-7a-methyl-1-oxo-octahydro-1H-inden-4-yl]prop-2-enoyl-CoA + AH2. The protein operates within steroid metabolism; cholesterol degradation. Its function is as follows. Involved in cholesterol degradation. Catalyzes the dehydrogenation of 5OH-HIP-CoA to 5OH-HIPE-CoA. This is Acyl-CoA dehydrogenase IpdE2 from Mycolicibacterium smegmatis (strain ATCC 700084 / mc(2)155) (Mycobacterium smegmatis).